A 1334-amino-acid chain; its full sequence is Lysine-specific demethylase 3A-B (1334 aa).

3 disordered regions span residues 243–288, 352–382, and 514–533; these read DQND…KTSF, PGIQ…SQNL, and KPQE…VTYP. Positions 267 to 283 are enriched in basic and acidic residues; it reads TEVKQTRNEEVPSKDVT. A C6-type zinc finger spans residues 684 to 709; sequence CDACDTTIFNLHWVCPKCGFGVCVDC. An LXXLL motif motif is present at residues 897-901; that stretch reads LRNLL. In terms of domain architecture, JmjC spans 1089–1294; it reads RREGKLNLAA…HCFCLTQEFR (206 aa). 3 residues coordinate Fe cation: His1133, Asp1135, and His1262.

This sequence belongs to the JHDM2 histone demethylase family. The cofactor is Fe(2+).

The protein resides in the cytoplasm. The protein localises to the nucleus. The enzyme catalyses N(6),N(6)-dimethyl-L-lysyl(9)-[histone H3] + 2 2-oxoglutarate + 2 O2 = L-lysyl(9)-[histone H3] + 2 formaldehyde + 2 succinate + 2 CO2. Histone demethylase that specifically demethylates 'Lys-9' of histone H3, thereby playing a central role in histone code. Preferentially demethylates mono- and dimethylated H3 'Lys-9' residue, with a preference for dimethylated residue, while it has weak or no activity on trimethylated H3 'Lys-9'. Demethylation of Lys residue generates formaldehyde and succinate. The polypeptide is Lysine-specific demethylase 3A-B (kdm3a-b) (Xenopus laevis (African clawed frog)).